The chain runs to 433 residues: Putative zinc metalloprotease BB_0118 (433 aa).

Zn(2+) is bound at residue His-17. Glu-18 is a catalytic residue. His-21 lines the Zn(2+) pocket. The helical transmembrane segment at 98–120 threads the bilayer; sequence ILIYFAGPLFNLIFSFIVFIFIS. A PDZ domain is found at 193 to 265; it reads TVSLQDFLKE…VVEIKFSRNG (73 aa). Transmembrane regions (helical) follow at residues 334-356, 366-388, and 401-423; these read VSGP…LYWI, LAGM…FISF, and TIYS…GLFN.

Belongs to the peptidase M50B family. Requires Zn(2+) as cofactor.

It is found in the cell inner membrane. This chain is Putative zinc metalloprotease BB_0118, found in Borreliella burgdorferi (strain ATCC 35210 / DSM 4680 / CIP 102532 / B31) (Borrelia burgdorferi).